Consider the following 1798-residue polypeptide: U3 small nucleolar RNA-associated protein 10 (1798 aa).

One copy of the HEAT 1 repeat lies at 583 to 620 (LDFQALLPFLLVTLTDPSERVRREAAAALAAVGSLYKK). A run of 2 helical transmembrane segments spans residues 942–962 (IQSG…AIVN) and 998–1018 (ALLL…HSVM). HEAT repeat units follow at residues 1042-1079 (QTID…AFEH), 1249-1286 (LTLV…QNPE), 1293-1331 (IRVL…KYGK), and 1754-1791 (ALLP…VLGE).

The protein belongs to the HEATR1/UTP10 family. Component of the ribosomal small subunit (SSU) processome.

Its subcellular location is the nucleus. The protein resides in the nucleolus. It localises to the membrane. Involved in nucleolar processing of pre-18S ribosomal RNA. Involved in ribosome biosynthesis. This chain is U3 small nucleolar RNA-associated protein 10, found in Aspergillus fumigatus (strain ATCC MYA-4609 / CBS 101355 / FGSC A1100 / Af293) (Neosartorya fumigata).